Here is a 695-residue protein sequence, read N- to C-terminus: RING finger protein 145 (695 aa).

13 consecutive transmembrane segments (helical) span residues 53–73, 77–97, 123–143, 146–166, 168–188, 225–245, 275–295, 316–336, 340–360, 384–404, 410–430, 460–480, and 482–502; these read YLALNMHYVGYILSVVLLTLP, LAKLYLYFVAALLLFAGHQIS, FITALVGQLVVCTLCSCVMKT, IWLFSAHMLPLLARLCLIPIE, IVVINKFAMIFTGLEVLYFLA, LVVPVLFMVFWLVLFALQIYT, YSLLGLVFTVSFVALGVLTLC, TEGVTLLILAVQTGLIELQVV, FLLSIILFIVVASILQSMLEI, SLCLFLLVFPSYMAYMICQFF, LLIIISSSILTSLQVLGTLFV, LLEFLVALCVVAYGVSETVFG, and WTVMGSMIIFIHSYYNVWLRA. Residues 537-575 form an RING-type; atypical zinc finger; sequence CSICYQDMNSAVITPCSHFFHPGCLKKWLYVQETCPLCH. The segment covering 589–604 has biased composition (polar residues); that stretch reads SGSSTNPVVEQSANNP. A disordered region spans residues 589–608; it reads SGSSTNPVVEQSANNPPQEP.

The protein resides in the membrane. The polypeptide is RING finger protein 145 (rnf145) (Xenopus laevis (African clawed frog)).